The primary structure comprises 312 residues: Taste receptor type 2 member 140 (312 aa).

The Extracellular portion of the chain corresponds to 1–9 (MKVTVECAL). Residues 10–30 (LITLIVEIIIGCLGNGFIAVV) traverse the membrane as a helical segment. Residues 31–46 (NIMDWTKRRRFSLVDQ) lie on the Cytoplasmic side of the membrane. A helical membrane pass occupies residues 47–67 (ILTALAISRLAFVWSLLTVLV). The Extracellular segment spans residues 68 to 87 (ISELHSSLLITRKMLRIINN). A helical transmembrane segment spans residues 88–108 (FWTVTNHFSIWLATCLSIFYF). Residues 109-133 (LKIANFSNSIFLSLRWRVKTVVSLT) lie on the Cytoplasmic side of the membrane. A helical transmembrane segment spans residues 134–154 (LLVSLLLLLVNVIIINTCIVI). Topologically, residues 155-185 (SVEGYKVNMSYSSHFNNNPQISRIPLFTNTM) are extracellular. N-linked (GlcNAc...) asparagine glycosylation occurs at Asn-162. A helical membrane pass occupies residues 186-206 (FTFIPFTVTLTIFLLLIFSLW). The Cytoplasmic portion of the chain corresponds to 207–229 (RHLKKMQHRAKGPRDPSTTAHIK). A helical membrane pass occupies residues 230–250 (ALQMVVTFLFLYTIFFLALVM). Residues 251 to 264 (QAWNNEIQSKTVFN) are Extracellular-facing. The helical transmembrane segment at 265-285 (LVFESIALAFPSGHSCVLILG) threads the bilayer. At 286–312 (NSKLRQAFLTIIWWLRSSFNAAELSSP) the chain is on the cytoplasmic side.

The protein belongs to the G-protein coupled receptor T2R family.

It localises to the membrane. In terms of biological role, putative taste receptor which may play a role in the perception of bitterness. This Rattus norvegicus (Rat) protein is Taste receptor type 2 member 140.